A 138-amino-acid polypeptide reads, in one-letter code: Large-conductance mechanosensitive channel (138 aa).

2 helical membrane passes run 19–39 and 81–101; these read VGVIIGAAFGAIVTSLVGDVI and GSFLTLTINFIIIAFVLFLVI.

It belongs to the MscL family. As to quaternary structure, homopentamer.

It is found in the cell inner membrane. In terms of biological role, channel that opens in response to stretch forces in the membrane lipid bilayer. May participate in the regulation of osmotic pressure changes within the cell. This chain is Large-conductance mechanosensitive channel, found in Bradyrhizobium diazoefficiens (strain JCM 10833 / BCRC 13528 / IAM 13628 / NBRC 14792 / USDA 110).